The sequence spans 324 residues: Ribosomal RNA small subunit methyltransferase H (324 aa).

S-adenosyl-L-methionine-binding positions include 40–42 (AGH), Asp-60, Leu-94, Asp-108, and His-115. The segment at 301–324 (EEMKVNTRSRSAKLRVAERTGEDG) is disordered. Basic and acidic residues predominate over residues 315–324 (RVAERTGEDG).

This sequence belongs to the methyltransferase superfamily. RsmH family.

The protein resides in the cytoplasm. It catalyses the reaction cytidine(1402) in 16S rRNA + S-adenosyl-L-methionine = N(4)-methylcytidine(1402) in 16S rRNA + S-adenosyl-L-homocysteine + H(+). Functionally, specifically methylates the N4 position of cytidine in position 1402 (C1402) of 16S rRNA. The sequence is that of Ribosomal RNA small subunit methyltransferase H from Maridesulfovibrio salexigens (strain ATCC 14822 / DSM 2638 / NCIMB 8403 / VKM B-1763) (Desulfovibrio salexigens).